A 237-amino-acid polypeptide reads, in one-letter code: Ribosomal RNA small subunit methyltransferase G (237 aa).

S-adenosyl-L-methionine-binding positions include glycine 76, phenylalanine 81, 128–129 (VE), and arginine 147.

This sequence belongs to the methyltransferase superfamily. RNA methyltransferase RsmG family.

Its subcellular location is the cytoplasm. In terms of biological role, specifically methylates the N7 position of a guanine in 16S rRNA. The protein is Ribosomal RNA small subunit methyltransferase G of Prochlorococcus marinus (strain MIT 9215).